The primary structure comprises 464 residues: MAVYNYDVVVLGSGPAGEGAAMNAAKAGRKVAMVDSRRQVGGNCTHLGTIPSKALRHSVRQIMQFNTNPMFRAIGEPRWFSFPDVLKSAEKVISKQVASRTGYYARNRVDVFFGTGSFADEQTVEVVCANGVVEKLVAKHIIIATGSRPYRPADIDFSHPRIYDSDTILSLGHTPRKLIVYGAGVIGCEYASIFSGLGVLVELVDNRGQLLSFLDSEISQALSYHFSNNNITVRHNEEYDRVEGVDNGVILHLKSGKKIKADALLWCNGRTGNTDKLGMENIGVKVNSRGQIEVDENYRTCVPNIYGAGDVIGWPSLASAAHDQGRSAAGSIVDNGSWRFVNDVPTGIYTIPEISSIGKNEQELTQAKVPYEVGKAFFKGMARAQIAGEPQGMLKILFHRETLEVLGVHCFGYQASEIVHIGQAIMSQPGELNTLKYFVNTTFNYPTMAEAYRVAAYDGLNRLF.

D35 to C44 contacts FAD.

The protein belongs to the class-I pyridine nucleotide-disulfide oxidoreductase family. Requires FAD as cofactor.

The protein localises to the cytoplasm. The catalysed reaction is NAD(+) + NADPH = NADH + NADP(+). Functionally, conversion of NADPH, generated by peripheral catabolic pathways, to NADH, which can enter the respiratory chain for energy generation. This chain is Soluble pyridine nucleotide transhydrogenase, found in Pseudomonas fluorescens (strain ATCC BAA-477 / NRRL B-23932 / Pf-5).